A 372-amino-acid polypeptide reads, in one-letter code: Glutamate 5-kinase (372 aa).

Residue lysine 14 coordinates ATP. The substrate site is built by serine 54, aspartate 141, and asparagine 153. 173–174 is an ATP binding site; that stretch reads TD. In terms of domain architecture, PUA spans 280–358; the sequence is RGTLVLDAGA…DAIESLLGYS (79 aa).

It belongs to the glutamate 5-kinase family.

Its subcellular location is the cytoplasm. It catalyses the reaction L-glutamate + ATP = L-glutamyl 5-phosphate + ADP. Its pathway is amino-acid biosynthesis; L-proline biosynthesis; L-glutamate 5-semialdehyde from L-glutamate: step 1/2. Catalyzes the transfer of a phosphate group to glutamate to form L-glutamate 5-phosphate. The sequence is that of Glutamate 5-kinase from Pseudomonas putida (strain W619).